The sequence spans 541 residues: Nif-specific regulatory protein (541 aa).

The region spanning 23–158 is the GAF domain; the sequence is RLETTLNNFV…MAANLAGRAI (136 aa). A disordered region spans residues 170–191; that stretch reads TFAEEQQEQQNSRDEQSQSSAR. The Sigma-54 factor interaction domain occupies 200 to 428; the sequence is IIGESTALMT…LENCVRRTAT (229 aa). Residues 228–235 and 291–300 contribute to the ATP site; these read GETGTGKE and ANGGTLLLDE. The tract at residues 429–498 is inter-domain linker; the sequence is LARSKTITSS…SAGVASNLIE (70 aa). The a divalent metal cation site is built by C442 and C447. The segment at 499 to 541 is C-terminal DNA-binding domain; sequence RDRLISALEEAGWNQAKAARILEKTPRQVGYALRRHGVDVRKL. Residues 513-532 constitute a DNA-binding region (H-T-H motif); the sequence is QAKAARILEKTPRQVGYALR.

As to quaternary structure, interacts with sigma-54.

Its function is as follows. Required for activation of most nif operons, which are directly involved in nitrogen fixation. The chain is Nif-specific regulatory protein (nifA) from Rhizobium meliloti (strain 1021) (Ensifer meliloti).